The sequence spans 147 residues: Leghemoglobin 3 (147 aa).

Positions 2 to 147 (GFTAQQEALV…LATAIKKAMG (146 aa)) constitute a Globin domain. Tyr30 carries the post-translational modification Nitrated tyrosine. Ser45 contacts heme b. Ser45 is modified (phosphoserine). An O2-binding site is contributed by His61. Heme b is bound by residues Lys64, His93, and Lys96. Nitrated tyrosine is present on Tyr135.

The protein belongs to the plant globin family. As to quaternary structure, monomer. In terms of processing, nitrated in effective nodules and particularly in hypoxic conditions; this mechanism may play a protective role in the symbiosis by buffering toxic peroxynitrite NO(2)(-). Nitration level decrease during nodule senescence. Phosphorylation at Ser-45 disrupts the molecular environment of its porphyrin ring oxygen binding pocket, thus leading to a reduced oxygen consumption and to the delivery of oxygen O(2) to symbiosomes. In terms of tissue distribution, specifically and strongly expressed in root nodules and at low levels in seedlings.

The protein resides in the cytoplasm. The protein localises to the cytosol. It localises to the nucleus. In terms of biological role, leghemoglobin that reversibly binds oxygen O(2) through a pentacoordinated heme iron. In root nodules, facilitates the diffusion of oxygen to the bacteroids while preventing the bacterial nitrogenase from being inactivated by buffering dioxygen, nitric oxide and carbon monoxide, and promoting the formation of reactive oxygen species (ROS, e.g. H(2)O(2)). This role is essential for symbiotic nitrogen fixation (SNF). The polypeptide is Leghemoglobin 3 (Lotus japonicus (Lotus corniculatus var. japonicus)).